An 830-amino-acid polypeptide reads, in one-letter code: Adhesion G protein-coupled receptor E2 (830 aa).

The N-terminal stretch at M1–A22 is a signal peptide. Topologically, residues A23–D540 are extracellular. The EGF-like 1 domain maps to K26 to D68. 5 cysteine pairs are disulfide-bonded: C30/C40, C34/C46, C48/C67, C73/C87, and C81/C96. Residue N42 is glycosylated (N-linked (GlcNAc...) asparagine). Residues D69–A108 form the EGF-like 1; calcium-binding domain. An N-linked (GlcNAc...) asparagine glycan is attached at N113. Residues D121–D159 enclose the EGF-like 2; calcium-binding domain. Cystine bridges form between C125–C138, C132–C147, C169–C182, C176–C191, C218–C231, and C225–C240. The region spanning D165–S203 is the EGF-like 3; calcium-binding domain. Residue N178 is glycosylated (N-linked (GlcNAc...) asparagine). The EGF-like 4; calcium-binding domain occupies D214–Q253. 4 N-linked (GlcNAc...) asparagine glycosylation sites follow: N258, N348, N361, and N379. In terms of domain architecture, GAIN-B spans W358–Q537. 2 disulfide bridges follow: C489–C519 and C507–C521. Residues C489 to Q537 are GPS. A helical membrane pass occupies residues L541 to A561. At A562–T576 the chain is on the cytoplasmic side. A helical membrane pass occupies residues S577–I597. The Extracellular portion of the chain corresponds to D598 to K603. Residues V604–M624 form a helical membrane-spanning segment. The Cytoplasmic segment spans residues L625–K651. Residues K652 to S672 traverse the membrane as a helical segment. Residues R673–R690 are Extracellular-facing. The helical transmembrane segment at F691–L711 threads the bilayer. At M712 to Q744 the chain is on the cytoplasmic side. Residues L745 to V765 traverse the membrane as a helical segment. The Extracellular segment spans residues M766–A767. The chain crosses the membrane as a helical span at residues Y768–L788. At S789–N830 the chain is on the cytoplasmic side.

This sequence belongs to the G-protein coupled receptor 2 family. Adhesion G-protein coupled receptor (ADGR) subfamily. As to quaternary structure, forms a heterodimer, consisting of a large extracellular region non-covalently linked to a seven-transmembrane moiety. Interacts with chondroitin sulfate; the interaction with chondroitin sulfate is calcium-dependent. Interacts with CD55. In terms of processing, autoproteolytically cleaved into 2 subunits, an extracellular alpha subunit and a seven-transmembrane beta subunit.

It localises to the cell membrane. The protein resides in the cell projection. Its subcellular location is the ruffle membrane. Functionally, cell surface receptor that binds to the chondroitin sulfate moiety of glycosaminoglycan chains and promotes cell attachment. Promotes granulocyte chemotaxis, degranulation and adhesion. In macrophages, promotes the release of inflammatory cytokines, including IL8 and TNF. Signals probably through G-proteins. The chain is Adhesion G protein-coupled receptor E2 (ADGRE2) from Canis lupus familiaris (Dog).